The following is a 143-amino-acid chain: Hemoglobin subunit alpha-1 (143 aa).

At serine 2 the chain carries N-acetylserine. The 142-residue stretch at 2–143 (SLSAKDKATV…LALALCEKYR (142 aa)) folds into the Globin domain. Histidine 60 lines the O2 pocket. Histidine 89 is a binding site for heme b.

Belongs to the globin family. As to quaternary structure, hb 1 is a heterotetramer of two alpha-1 and two beta-1 chains. In terms of tissue distribution, red blood cells.

Its function is as follows. Involved in oxygen transport from gills to the various peripheral tissues. In Boreogadus saida (Polar cod), this protein is Hemoglobin subunit alpha-1 (hba1).